We begin with the raw amino-acid sequence, 807 residues long: uncharacterized protein (807 aa).

The protein belongs to the IIV-6 155L family.

This is an uncharacterized protein from Aedes vexans (Inland floodwater mosquito).